The sequence spans 668 residues: Fe(2+) transporter FeoB (668 aa).

The FeoB-type G domain maps to 3–165 (SYEIALIGNP…KKAISIAVKD (163 aa)). 10–17 (GNPNVGKS) contributes to the GTP binding site. N21, A22, T24, and G25 together coordinate Mg(2+). Residues 35 to 39 (GVTVE), 56 to 59 (DLPG), 116 to 119 (NKMD), and 145 to 147 (SAA) contribute to the GTP site. The next 8 membrane-spanning stretches (helical) occupy residues 344 to 364 (VGAV…ISFL), 386 to 406 (LPGK…PAIM), 418 to 438 (ILTI…IYAL), 450 to 470 (VVIL…AFLF), 515 to 535 (IIVF…SGYL), 574 to 594 (ALVF…MLYG), 613 to 633 (AYAF…LAVI), and 643 to 663 (LFAV…ISVI).

It belongs to the TRAFAC class TrmE-Era-EngA-EngB-Septin-like GTPase superfamily. FeoB GTPase (TC 9.A.8) family. The crystallized N-terminal domain is a homodimer.

The protein localises to the cell membrane. In terms of biological role, probable transporter of a GTP-driven Fe(2+) uptake system, might be able to transport Fe(2+) into or out of the cell. This Methanocaldococcus jannaschii (strain ATCC 43067 / DSM 2661 / JAL-1 / JCM 10045 / NBRC 100440) (Methanococcus jannaschii) protein is Fe(2+) transporter FeoB.